An 827-amino-acid polypeptide reads, in one-letter code: SH3-containing GRB2-like protein 3-interacting protein 1 (827 aa).

Disordered stretches follow at residues 1–116 (MMEG…SHKK), 143–199 (IGNI…ALAP), and 223–278 (IWGS…QAAT). Composition is skewed to basic and acidic residues over residues 16 to 32 (RKKEKDTDSTGSPDRDG) and 40 to 53 (LPYHSKAECAREGG). Phosphoserine occurs at positions 78, 104, 105, 107, 149, 151, 156, and 169. A phosphothreonine mark is found at Thr-180 and Thr-182. Position 236 is a phosphoserine (Ser-236). A compositionally biased stretch (pro residues) spans 245 to 260 (TGTPPPLPPKTVPATP). 2 positions are modified to phosphothreonine: Thr-247 and Thr-259. A phosphoserine mark is found at Ser-265, Ser-287, Ser-289, Ser-300, Ser-316, and Ser-319. A compositionally biased stretch (polar residues) spans 265 to 276 (SPLTVATGNDQA). Positions 315-505 (FSDASPEHVT…IAPLARAEST (191 aa)) are disordered. Residues 319 to 333 (SPEHVTPELTPREKV) are compositionally biased toward basic and acidic residues. Residues Thr-324, Thr-328, and Thr-335 each carry the phosphothreonine modification. Positions 335–345 (TPPAASDIPAD) are enriched in low complexity. Residues 346–369 (SPTPGPPGPPGSAGPPGPPGPRNV) show a composition bias toward pro residues. The residue at position 371 (Ser-371) is a Phosphoserine. Residues 377–392 (EVQKKVAEQTFIKDDY) are compositionally biased toward basic and acidic residues. Residue Ser-398 is modified to Phosphoserine. A Phosphothreonine modification is found at Thr-409. Residues 436–455 (ASGASSPARPATPLVPCSCS) are compositionally biased toward low complexity. Positions 456–474 (TPPPPPPRPPSRPKLPPGK) are enriched in pro residues. A compositionally biased stretch (low complexity) spans 481–491 (SRPFSPPIHSS). Position 485 is a phosphoserine (Ser-485). The 269-residue stretch at 558-826 (TLPVAAAFTE…RFAAGKYLAD (269 aa)) folds into the MHD domain. Interaction with DPF motifs-containing proteins regions lie at residues 560-566 (PVAAAFT), 592-594 (SFP), 666-669 (TYYN), and 812-817 (SLIKKR). A necessary and sufficient to mediate interaction with CANX region spans residues 648-827 (MPNLMTHLKK…FAAGKYLADN (180 aa)).

In terms of assembly, interacts with proteins essential or regulating the formation of functional clathrin-coated pits. Interacts with CANX. Interacts with AP2A1. Interacts with EPS15. Interacts with SH3GL3. Interacts with AMPH. Interacts with ITSN1 (via SH3 domains). Interacts with and REPS1. As to expression, specifically expressed in brain. Also detected at lower levels in spleen and adipose tissue.

It localises to the membrane. The protein resides in the clathrin-coated pit. May function in clathrin-mediated endocytosis. Has both a membrane binding/tubulating activity and the ability to recruit proteins essential to the formation of functional clathrin-coated pits. Has a preference for membranes enriched in phosphatidylserine and phosphoinositides and is required for the endocytosis of the transferrin receptor. May also bind tubulin. May play a role in the regulation of energy homeostasis. This is SH3-containing GRB2-like protein 3-interacting protein 1 (SGIP1) from Psammomys obesus (Fat sand rat).